Consider the following 418-residue polypeptide: UDP-N-acetylglucosamine 1-carboxyvinyltransferase (418 aa).

Residue 23–24 (KN) participates in phosphoenolpyruvate binding. Arg93 provides a ligand contact to UDP-N-acetyl-alpha-D-glucosamine. Asp117 (proton donor) is an active-site residue. Asp305 and Val327 together coordinate UDP-N-acetyl-alpha-D-glucosamine.

It belongs to the EPSP synthase family. MurA subfamily.

It is found in the cytoplasm. The catalysed reaction is phosphoenolpyruvate + UDP-N-acetyl-alpha-D-glucosamine = UDP-N-acetyl-3-O-(1-carboxyvinyl)-alpha-D-glucosamine + phosphate. The protein operates within cell wall biogenesis; peptidoglycan biosynthesis. Functionally, cell wall formation. Adds enolpyruvyl to UDP-N-acetylglucosamine. The protein is UDP-N-acetylglucosamine 1-carboxyvinyltransferase of Mycobacterium bovis (strain ATCC BAA-935 / AF2122/97).